Consider the following 114-residue polypeptide: Astacin-like metalloprotease toxin 4 (114 aa).

The region spanning 1–114 (RETNENDYVD…GLLCLFKGSV (114 aa)) is the Peptidase M12A domain. Cys-17 and Cys-38 are oxidised to a cystine. A Zn(2+)-binding site is contributed by His-46. The active site involves Glu-47. 2 residues coordinate Zn(2+): His-50 and His-56. Asn-88 is a glycosylation site (N-linked (GlcNAc...) asparagine).

In terms of assembly, monomer. Zn(2+) serves as cofactor. Expressed by the venom gland.

Its subcellular location is the secreted. Its activity is regulated as follows. Inhibited by 1,10-phenanthroline. In terms of biological role, zinc metalloprotease. Provoques deadhesion of endothelial cells from cell cultures, and also degradation of fibronectin, fibrinogen and gelatin in vitro. Its role in the venom is not fully understood but it might act as a spreading factor that facilitates diffusion of other venom toxins. Alternatively, it might be involved in the proteolytic processing of other venom toxins or it might play a role in extra-oral digestion of prey. The polypeptide is Astacin-like metalloprotease toxin 4 (Loxosceles laeta (South American recluse spider)).